A 508-amino-acid chain; its full sequence is WD repeat-containing protein JIP5 (508 aa).

6 WD repeats span residues glutamate 62 to lysine 105, arginine 106 to lysine 145, aspartate 149 to threonine 188, histidine 193 to proline 233, aspartate 253 to glutamine 294, and serine 345 to serine 382. The segment at lysine 376–leucine 508 is disordered. Residues serine 380–glutamate 393 show a composition bias toward acidic residues. Residues glutamate 407–aspartate 419 show a composition bias toward low complexity. Residues cysteine 431–glutamate 472 form a WD 7 repeat. Positions glutamate 441–asparagine 454 are enriched in acidic residues. The span at histidine 455–aspartate 466 shows a compositional bias: basic and acidic residues. The span at lysine 478–lysine 492 shows a compositional bias: basic residues.

The protein belongs to the WD repeat WDR55 family.

It is found in the nucleus. Its subcellular location is the nucleolus. In Candida glabrata (strain ATCC 2001 / BCRC 20586 / JCM 3761 / NBRC 0622 / NRRL Y-65 / CBS 138) (Yeast), this protein is WD repeat-containing protein JIP5 (JIP5).